Consider the following 275-residue polypeptide: 2,3,4,5-tetrahydropyridine-2,6-dicarboxylate N-succinyltransferase (275 aa).

Substrate contacts are provided by Arg-106 and Asp-143.

This sequence belongs to the transferase hexapeptide repeat family. In terms of assembly, homotrimer.

The protein localises to the cytoplasm. It carries out the reaction (S)-2,3,4,5-tetrahydrodipicolinate + succinyl-CoA + H2O = (S)-2-succinylamino-6-oxoheptanedioate + CoA. It participates in amino-acid biosynthesis; L-lysine biosynthesis via DAP pathway; LL-2,6-diaminopimelate from (S)-tetrahydrodipicolinate (succinylase route): step 1/3. This Cupriavidus necator (strain ATCC 17699 / DSM 428 / KCTC 22496 / NCIMB 10442 / H16 / Stanier 337) (Ralstonia eutropha) protein is 2,3,4,5-tetrahydropyridine-2,6-dicarboxylate N-succinyltransferase.